The chain runs to 390 residues: Protein SOSEKI 4 (390 aa).

The tract at residues 22–115 (RMAEVLYVLS…YALKATKRFD (94 aa)) is DIX-like oligomerization domain. Disordered regions lie at residues 210-247 (KSNS…NRTG) and 291-321 (RESN…SGGS). Residues 304–321 (PSVQAETHVSKLSKSGGS) show a composition bias toward polar residues.

This sequence belongs to the SOSEKI family. In terms of assembly, homodimer. Forms long polymer filaments with other SOKs proteins polymers crucial for polar localization and biological activity.

It is found in the cell membrane. Its function is as follows. SOSEKI proteins locally interpret global polarity cues and can influence cell division orientation to coordinate cell polarization relative to body axes. This chain is Protein SOSEKI 4, found in Physcomitrium patens (Spreading-leaved earth moss).